We begin with the raw amino-acid sequence, 177 residues long: Large ribosomal subunit protein uL6 (177 aa).

Residues 151 to 177 form a disordered region; the sequence is LRPPEPYKGKGVRYAGENVRRKEGKKK.

It belongs to the universal ribosomal protein uL6 family. In terms of assembly, part of the 50S ribosomal subunit.

Functionally, this protein binds to the 23S rRNA, and is important in its secondary structure. It is located near the subunit interface in the base of the L7/L12 stalk, and near the tRNA binding site of the peptidyltransferase center. The polypeptide is Large ribosomal subunit protein uL6 (Phenylobacterium zucineum (strain HLK1)).